We begin with the raw amino-acid sequence, 244 residues long: Phosphonates import ATP-binding protein PhnC (244 aa).

In terms of domain architecture, ABC transporter spans 6 to 244 (IECHNLETAY…LQAQFVVNSQ (239 aa)). ATP is bound at residue 41–48 (GLNGAGKS).

It belongs to the ABC transporter superfamily. Phosphonates importer (TC 3.A.1.9.1) family. The complex is composed of two ATP-binding proteins (PhnC), two transmembrane proteins (PhnE) and a solute-binding protein (PhnD).

The protein resides in the cell inner membrane. It catalyses the reaction phosphonate(out) + ATP + H2O = phosphonate(in) + ADP + phosphate + H(+). Part of the ABC transporter complex PhnCDE involved in phosphonates import. Responsible for energy coupling to the transport system. This chain is Phosphonates import ATP-binding protein PhnC, found in Trichormus variabilis (strain ATCC 29413 / PCC 7937) (Anabaena variabilis).